Consider the following 227-residue polypeptide: Phosphoribosylformylglycinamidine synthase subunit PurQ (227 aa).

The Glutamine amidotransferase type-1 domain occupies 3–225 (FAVIVFPGSN…LKQWRETYVV (223 aa)). The active-site Nucleophile is C86. Catalysis depends on residues H194 and E196.

As to quaternary structure, part of the FGAM synthase complex composed of 1 PurL, 1 PurQ and 2 PurS subunits.

The protein localises to the cytoplasm. It catalyses the reaction N(2)-formyl-N(1)-(5-phospho-beta-D-ribosyl)glycinamide + L-glutamine + ATP + H2O = 2-formamido-N(1)-(5-O-phospho-beta-D-ribosyl)acetamidine + L-glutamate + ADP + phosphate + H(+). The catalysed reaction is L-glutamine + H2O = L-glutamate + NH4(+). It functions in the pathway purine metabolism; IMP biosynthesis via de novo pathway; 5-amino-1-(5-phospho-D-ribosyl)imidazole from N(2)-formyl-N(1)-(5-phospho-D-ribosyl)glycinamide: step 1/2. Its function is as follows. Part of the phosphoribosylformylglycinamidine synthase complex involved in the purines biosynthetic pathway. Catalyzes the ATP-dependent conversion of formylglycinamide ribonucleotide (FGAR) and glutamine to yield formylglycinamidine ribonucleotide (FGAM) and glutamate. The FGAM synthase complex is composed of three subunits. PurQ produces an ammonia molecule by converting glutamine to glutamate. PurL transfers the ammonia molecule to FGAR to form FGAM in an ATP-dependent manner. PurS interacts with PurQ and PurL and is thought to assist in the transfer of the ammonia molecule from PurQ to PurL. This Bacillus anthracis (strain A0248) protein is Phosphoribosylformylglycinamidine synthase subunit PurQ.